A 114-amino-acid polypeptide reads, in one-letter code: Iron-sulfur cluster insertion protein ErpA (114 aa).

Residues Cys42, Cys106, and Cys108 each coordinate iron-sulfur cluster.

This sequence belongs to the HesB/IscA family. Homodimer. Iron-sulfur cluster serves as cofactor.

In terms of biological role, required for insertion of 4Fe-4S clusters for at least IspG. The polypeptide is Iron-sulfur cluster insertion protein ErpA (Citrobacter koseri (strain ATCC BAA-895 / CDC 4225-83 / SGSC4696)).